Consider the following 806-residue polypeptide: Putative phage-related protein YobO (806 aa).

Residues 1–23 (MVHFKNCPDPSLNANSQSHPEFS) are disordered. Residues 12-21 (LNANSQSHPE) show a composition bias toward polar residues. 6 PbH1 repeats span residues 199-221 (VEYG…DITS), 237-259 (SRYI…TTHY), 260-292 (SEYI…EIDD), 294-315 (SRHV…EVKA), 419-441 (SQNI…DINL), and 448-470 (TDYI…SIGG).

This chain is Putative phage-related protein YobO (yobO), found in Bacillus subtilis (strain 168).